Reading from the N-terminus, the 658-residue chain is MERQFEIVSAYSPQGDQPVAIEKLVEGINSGKKKQVLLGATGTGKTFTISNVIKEVQKPTLVMAHNKTLAGQLYSELKDFFPNNAVEYFVSYYDYYQPEAYVPQTDTFIEKDAQINDEIDKLRHSATSALFERDDVIIVASVSCIYGLGSPEEYRELVVSLRVGMEKDRNQLLRELVDVQYGRNDIDFKRGTFRVRGDVVEIFPASLDEHCIRIEFFGDEIDRIREVNALTGEVLAERDHVAIFPASHFVTREEKMKVAIENIEKELEERLKELNDNGKLLEAQRIEQRTRYDLEMMREMGFCSGIENYSRHLTLRPAGATPYTLLDYFPKDFLIVMDESHVSVPQVRAMYNGDQARKQVLVDHGFRLPSALDNRPLTFDEFEEKTNQVIYVSATPGPYELEQSPEVIEQIIRPTGLLDPPIDIRPIEGQIDDLLGEIQDRIAKNERVLITTLTKKMSEDLTDYLKDVGIKVNYLHSEVKTLERIEIIRDLRLGKFDVLVGINLLREGLDIPEVSLVAILDADKEGFLRSERSLIQTIGRAARNENGRVIMYADRITRSMEIAIEETKRRRSIQEAYNEEHGITPKTIQKGVRDVIRATTAAEETETYEATPAKKMTKKEREKTIAKMEAEMKEAAKALDFERAAELRDLLLELKAEG.

The region spanning 26–413 is the Helicase ATP-binding domain; the sequence is EGINSGKKKQ…SPEVIEQIIR (388 aa). 39–46 contacts ATP; that stretch reads GATGTGKT. The Beta-hairpin signature appears at 92–115; sequence YYDYYQPEAYVPQTDTFIEKDAQI. Residues 430–596 form the Helicase C-terminal domain; that stretch reads QIDDLLGEIQ…TIQKGVRDVI (167 aa). A UVR domain is found at 622-657; sequence EKTIAKMEAEMKEAAKALDFERAAELRDLLLELKAE.

This sequence belongs to the UvrB family. As to quaternary structure, forms a heterotetramer with UvrA during the search for lesions. Interacts with UvrC in an incision complex.

The protein localises to the cytoplasm. In terms of biological role, the UvrABC repair system catalyzes the recognition and processing of DNA lesions. A damage recognition complex composed of 2 UvrA and 2 UvrB subunits scans DNA for abnormalities. Upon binding of the UvrA(2)B(2) complex to a putative damaged site, the DNA wraps around one UvrB monomer. DNA wrap is dependent on ATP binding by UvrB and probably causes local melting of the DNA helix, facilitating insertion of UvrB beta-hairpin between the DNA strands. Then UvrB probes one DNA strand for the presence of a lesion. If a lesion is found the UvrA subunits dissociate and the UvrB-DNA preincision complex is formed. This complex is subsequently bound by UvrC and the second UvrB is released. If no lesion is found, the DNA wraps around the other UvrB subunit that will check the other stand for damage. The protein is UvrABC system protein B of Bacillus cereus (strain ATCC 10987 / NRS 248).